The following is a 181-amino-acid chain: UPF0397 protein SUB0313 (181 aa).

5 helical membrane passes run 11–31, 45–65, 69–89, 114–134, and 147–167; these read AIGI…ITIF, LFSV…GHML, FAGY…GLGI, VQAL…DILI, and LFAA…LLIA.

Belongs to the UPF0397 family.

Its subcellular location is the cell membrane. In Streptococcus uberis (strain ATCC BAA-854 / 0140J), this protein is UPF0397 protein SUB0313.